The sequence spans 189 residues: Peptide deformylase (189 aa).

Cysteine 98 and histidine 140 together coordinate Fe cation. Glutamate 141 is a catalytic residue. Histidine 144 is a binding site for Fe cation.

Belongs to the polypeptide deformylase family. Requires Fe(2+) as cofactor.

The enzyme catalyses N-terminal N-formyl-L-methionyl-[peptide] + H2O = N-terminal L-methionyl-[peptide] + formate. In terms of biological role, removes the formyl group from the N-terminal Met of newly synthesized proteins. Requires at least a dipeptide for an efficient rate of reaction. N-terminal L-methionine is a prerequisite for activity but the enzyme has broad specificity at other positions. The chain is Peptide deformylase from Porphyromonas gingivalis (strain ATCC 33277 / DSM 20709 / CIP 103683 / JCM 12257 / NCTC 11834 / 2561).